The primary structure comprises 487 residues: UPF0276 protein SAV_2218 (487 aa).

The tract at residues 1-285 is UPF0276; the sequence is MVEEGTMERL…LGAIRKTLEK (285 aa). The segment at 286–487 is unknown; that stretch reads AGTRAGASAG…RATRRVLLRR (202 aa). Residues 319–348 form a disordered region; sequence AGPRRGGADAQAAPRAAGTEALSAASTSTP. A compositionally biased stretch (low complexity) spans 326 to 348; that stretch reads ADAQAAPRAAGTEALSAASTSTP.

This sequence in the N-terminal section; belongs to the UPF0276 family.

The protein is UPF0276 protein SAV_2218 of Streptomyces avermitilis (strain ATCC 31267 / DSM 46492 / JCM 5070 / NBRC 14893 / NCIMB 12804 / NRRL 8165 / MA-4680).